Reading from the N-terminus, the 162-residue chain is Transcription antitermination protein NusB (162 aa).

It belongs to the NusB family.

In terms of biological role, involved in transcription antitermination. Required for transcription of ribosomal RNA (rRNA) genes. Binds specifically to the boxA antiterminator sequence of the ribosomal RNA (rrn) operons. The sequence is that of Transcription antitermination protein NusB from Mycobacterium sp. (strain JLS).